Here is a 116-residue protein sequence, read N- to C-terminus: Protein Rev (116 aa).

Phosphoserine; by host CK2 is present on residues serine 5 and serine 8. A homomultimerization region spans residues 18–26 (LIKFLYQSN). The segment at 23–48 (YQSNPPPKPEGTRQARRNRRRRWRER) is disordered. The short motif at 34-50 (TRQARRNRRRRWRERQR) is the Nuclear localization signal and RNA-binding (RRE) element. Residues 36 to 47 (QARRNRRRRWRE) are compositionally biased toward basic residues. A Nuclear export signal and binding to XPO1 motif is present at residues 73-84 (LQLPPLERLTLD). A phosphoserine; by host mark is found at serine 92 and serine 99. The interval 92 to 116 (SGTQGVGSPQILVESPTVLESGTKE) is disordered.

It belongs to the HIV-1 REV protein family. Homomultimer; when bound to the RRE. Multimeric assembly is essential for activity and may involve XPO1. Binds to human KPNB1, XPO1, TNPO1, RANBP5 and IPO7. Interacts with the viral Integrase. Interacts with human KHDRBS1. Interacts with human NAP1; this interaction decreases Rev multimerization and stimulates its activity. Interacts with human DEAD-box helicases DDX3 and DDX24; these interactions may serve for viral RNA export to the cytoplasm and packaging, respectively. Interacts with human PSIP1; this interaction may inhibit HIV-1 DNA integration by promoting dissociation of the Integrase-LEDGF/p75 complex. Asymmetrically arginine dimethylated at one site by host PRMT6. Methylation impairs the RNA-binding activity and export of viral RNA from the nucleus to the cytoplasm. In terms of processing, phosphorylated by protein kinase CK2. Presence of, and maybe binding to the N-terminus of the regulatory beta subunit of CK2 is necessary for CK2-mediated Rev's phosphorylation.

The protein localises to the host nucleus. The protein resides in the host nucleolus. Its subcellular location is the host cytoplasm. Escorts unspliced or incompletely spliced viral pre-mRNAs (late transcripts) out of the nucleus of infected cells. These pre-mRNAs carry a recognition sequence called Rev responsive element (RRE) located in the env gene, that is not present in fully spliced viral mRNAs (early transcripts). This function is essential since most viral proteins are translated from unspliced or partially spliced pre-mRNAs which cannot exit the nucleus by the pathway used by fully processed cellular mRNAs. Rev itself is translated from a fully spliced mRNA that readily exits the nucleus. Rev's nuclear localization signal (NLS) binds directly to KPNB1/Importin beta-1 without previous binding to KPNA1/Importin alpha-1. KPNB1 binds to the GDP bound form of RAN (Ran-GDP) and targets Rev to the nucleus. In the nucleus, the conversion from Ran-GDP to Ran-GTP dissociates Rev from KPNB1 and allows Rev's binding to the RRE in viral pre-mRNAs. Rev multimerization on the RRE via cooperative assembly exposes its nuclear export signal (NES) to the surface. Rev can then form a complex with XPO1/CRM1 and Ran-GTP, leading to nuclear export of the complex. Conversion from Ran-GTP to Ran-GDP mediates dissociation of the Rev/RRE/XPO1/RAN complex, so that Rev can return to the nucleus for a subsequent round of export. Beside KPNB1, also seems to interact with TNPO1/Transportin-1, RANBP5/IPO5 and IPO7/RANBP7 for nuclear import. The nucleoporin-like HRB/RIP is an essential cofactor that probably indirectly interacts with Rev to release HIV RNAs from the perinuclear region to the cytoplasm. The protein is Protein Rev of Human immunodeficiency virus type 1 group M subtype B (isolate SC) (HIV-1).